Reading from the N-terminus, the 435-residue chain is tRNA modification GTPase MnmE (435 aa).

Arginine 24, glutamate 85, and arginine 124 together coordinate (6S)-5-formyl-5,6,7,8-tetrahydrofolate. A TrmE-type G domain is found at glycine 220 to arginine 361. K(+) is bound at residue asparagine 230. Residues asparagine 230–serine 235, serine 249–threonine 255, and aspartate 274–glycine 277 contribute to the GTP site. Serine 234 serves as a coordination point for Mg(2+). K(+) is bound by residues serine 249, isoleucine 251, and threonine 254. A Mg(2+)-binding site is contributed by threonine 255. Position 435 (lysine 435) interacts with (6S)-5-formyl-5,6,7,8-tetrahydrofolate.

It belongs to the TRAFAC class TrmE-Era-EngA-EngB-Septin-like GTPase superfamily. TrmE GTPase family. As to quaternary structure, homodimer. Heterotetramer of two MnmE and two MnmG subunits. Requires K(+) as cofactor.

Its subcellular location is the cytoplasm. In terms of biological role, exhibits a very high intrinsic GTPase hydrolysis rate. Involved in the addition of a carboxymethylaminomethyl (cmnm) group at the wobble position (U34) of certain tRNAs, forming tRNA-cmnm(5)s(2)U34. In Gluconacetobacter diazotrophicus (strain ATCC 49037 / DSM 5601 / CCUG 37298 / CIP 103539 / LMG 7603 / PAl5), this protein is tRNA modification GTPase MnmE.